The following is a 243-amino-acid chain: Sec-independent protein translocase protein TATB, chloroplastic (243 aa).

Residues 1 to 67 constitute a chloroplast transit peptide; the sequence is MTPTANLLLP…SRTRRRNVIC (67 aa). At 68 to 69 the chain is on the lumenal side; that stretch reads AS. The chain crosses the membrane as a helical span at residues 70-90; that stretch reads LFGVGAPEALVIGVVALLVFG. Over 91–243 the chain is Stromal; sequence PKGLAEVARN…NKSQKAEGER (153 aa). Disordered regions lie at residues 129 to 165 and 178 to 243; these read EIGI…PAPY and IAAS…EGER. Composition is skewed to polar residues over residues 135 to 152 and 187 to 204; these read VSQS…NQQP and NPQQ…PTTP.

This sequence belongs to the TatB family. As to quaternary structure, in thylakoid membranes, TATC and TATB form a large receptor complex, containing about eight TATC-TATB pairs, which binds the precursor protein. Twin arginine signal peptide promotes pH-triggered docking of TATA oligomers to TATC-TATB receptor complex, inducing a conformational switch of TATA that results in activation of the translocase. TATA dissociates from TATC-TATB upon completion of translocation.

The protein resides in the plastid. Its subcellular location is the chloroplast thylakoid membrane. In terms of biological role, part of the twin-arginine translocation (Tat) system that transports large folded proteins containing a characteristic twin-arginine motif in their signal peptide across the thylakoid membrane. Involved in delta pH-dependent protein transport required for chloroplast development, especially thylakoid membrane formation. TATC and TATB mediate precursor recognition, whereas TATA facilitates translocation. In Zea mays (Maize), this protein is Sec-independent protein translocase protein TATB, chloroplastic.